A 176-amino-acid chain; its full sequence is NAD(P)H-quinone oxidoreductase subunit 6, chloroplastic (176 aa).

A run of 5 helical transmembrane segments spans residues 10 to 30, 33 to 53, 60 to 80, 95 to 115, and 152 to 172; these read ILML…VLLT, IYSA…YFLL, VAQL…AVMF, IGDG…MTTI, and FYLP…GAIT.

It belongs to the complex I subunit 6 family. In terms of assembly, NDH is composed of at least 16 different subunits, 5 of which are encoded in the nucleus.

It localises to the plastid. Its subcellular location is the chloroplast thylakoid membrane. It catalyses the reaction a plastoquinone + NADH + (n+1) H(+)(in) = a plastoquinol + NAD(+) + n H(+)(out). It carries out the reaction a plastoquinone + NADPH + (n+1) H(+)(in) = a plastoquinol + NADP(+) + n H(+)(out). Its function is as follows. NDH shuttles electrons from NAD(P)H:plastoquinone, via FMN and iron-sulfur (Fe-S) centers, to quinones in the photosynthetic chain and possibly in a chloroplast respiratory chain. The immediate electron acceptor for the enzyme in this species is believed to be plastoquinone. Couples the redox reaction to proton translocation, and thus conserves the redox energy in a proton gradient. The polypeptide is NAD(P)H-quinone oxidoreductase subunit 6, chloroplastic (ndhG) (Lolium perenne (Perennial ryegrass)).